The primary structure comprises 114 residues: uncharacterized protein (114 aa).

It to M.kandleri MK0008.

This is an uncharacterized protein from Methanocaldococcus jannaschii (strain ATCC 43067 / DSM 2661 / JAL-1 / JCM 10045 / NBRC 100440) (Methanococcus jannaschii).